A 145-amino-acid polypeptide reads, in one-letter code: Large ribosomal subunit protein uL24 (145 aa).

A disordered region spans residues 108 to 145; it reads EPIQEEQQKTEETKQEIAPEEVEAKEAQDKQEVKENDQ. The span at 113-145 shows a compositional bias: basic and acidic residues; that stretch reads EQQKTEETKQEIAPEEVEAKEAQDKQEVKENDQ.

It belongs to the universal ribosomal protein uL24 family. Part of the 50S ribosomal subunit.

One of two assembly initiator proteins, it binds directly to the 5'-end of the 23S rRNA, where it nucleates assembly of the 50S subunit. Functionally, located at the polypeptide exit tunnel on the outside of the subunit. The protein is Large ribosomal subunit protein uL24 (rpl24) of Thermoplasma volcanium (strain ATCC 51530 / DSM 4299 / JCM 9571 / NBRC 15438 / GSS1).